The sequence spans 157 residues: Probable succinate transporter subunit YjjB (157 aa).

The next 5 membrane-spanning stretches (helical) occupy residues 8–28 (LALM…AMVF), 34–54 (ALPW…LMMS), 55–75 (AGFN…SIGI), 87–107 (VFTV…TAMI), and 129–149 (FLKA…PGLW).

The protein belongs to the ThrE exporter (TC 2.A.79) family. As to quaternary structure, the transporter is composed of YjjB and YjjP.

Its subcellular location is the cell inner membrane. Functionally, involved in succinate export with YjjP. Both proteins are required for export. This Salmonella typhi protein is Probable succinate transporter subunit YjjB.